Reading from the N-terminus, the 181-residue chain is Oleosin (181 aa).

The tract at residues 1–28 (TTTTYDRHFTTTQPHYRQDDRSRYDQQT) is disordered. A polar region spans residues 1–38 (TTTTYDRHFTTTQPHYRQDDRSRYDQQTHSQSTSRTLA). The span at 16 to 26 (YRQDDRSRYDQ) shows a compositional bias: basic and acidic residues. Helical transmembrane passes span 38–58 (AIIA…LTFI), 69–89 (PLFV…GLAV), and 90–110 (TGFL…SYLF). The hydrophobic stretch occupies residues 39–110 (IIALLPVGGI…TGLSSLSYLF (72 aa)). The tract at residues 155 to 181 (EMGDQGQVGVHAQVGGGKEGRKSGDRT) is disordered. Residues 158–167 (DQGQVGVHAQ) are compositionally biased toward low complexity. The span at 172-181 (KEGRKSGDRT) shows a compositional bias: basic and acidic residues.

This sequence belongs to the oleosin family.

The protein resides in the lipid droplet. It is found in the membrane. In terms of biological role, may have a structural role to stabilize the lipid body during desiccation of the seed by preventing coalescence of the oil. Probably interacts with both lipid and phospholipid moieties of lipid bodies. May also provide recognition signals for specific lipase anchorage in lipolysis during seedling growth. This chain is Oleosin, found in Helianthus annuus (Common sunflower).